Here is an 822-residue protein sequence, read N- to C-terminus: Serine/threonine-protein phosphatase 4 regulatory subunit 3 (822 aa).

In terms of domain architecture, WH1 spans 1–100 (MTDTRRRVKV…DEIWEKICQV (100 aa)). Positions 744-822 (TSQLSASGHP…PLTKKARLGS (79 aa)) are disordered. Over residues 761–774 (SPGSPESPGSVSKS) the composition is skewed to low complexity. The segment covering 793–808 (YPDDDEEDDDNDEEEK) has biased composition (acidic residues).

The protein belongs to the SMEK family. In terms of assembly, serine/threonine-protein phosphatase 4 (PP4) occurs in different assemblies of the catalytic and one or more regulatory subunits.

Functionally, regulatory subunit of serine/threonine-protein phosphatase 4. This Xenopus laevis (African clawed frog) protein is Serine/threonine-protein phosphatase 4 regulatory subunit 3 (smek1).